The sequence spans 347 residues: GMP reductase (347 aa).

108 to 131 contacts NADP(+); that stretch reads ADFEKTVQILALNPALNFVCIDVA. K(+) contacts are provided by Gly181 and Gly183. Cys186 (thioimidate intermediate) is an active-site residue. 216-239 provides a ligand contact to NADP(+); sequence IVSDGGCTMPGDVAKAFGGGADFV.

The protein belongs to the IMPDH/GMPR family. GuaC type 1 subfamily. As to quaternary structure, homotetramer.

The catalysed reaction is IMP + NH4(+) + NADP(+) = GMP + NADPH + 2 H(+). Functionally, catalyzes the irreversible NADPH-dependent deamination of GMP to IMP. It functions in the conversion of nucleobase, nucleoside and nucleotide derivatives of G to A nucleotides, and in maintaining the intracellular balance of A and G nucleotides. The polypeptide is GMP reductase (Salmonella paratyphi A (strain ATCC 9150 / SARB42)).